The sequence spans 490 residues: N-succinylglutamate 5-semialdehyde dehydrogenase (490 aa).

NAD(+) is bound at residue 223 to 228 (GSAGTG). Residues Glu-246 and Cys-280 contribute to the active site.

This sequence belongs to the aldehyde dehydrogenase family. AstD subfamily.

It catalyses the reaction N-succinyl-L-glutamate 5-semialdehyde + NAD(+) + H2O = N-succinyl-L-glutamate + NADH + 2 H(+). It participates in amino-acid degradation; L-arginine degradation via AST pathway; L-glutamate and succinate from L-arginine: step 4/5. Functionally, catalyzes the NAD-dependent reduction of succinylglutamate semialdehyde into succinylglutamate. This chain is N-succinylglutamate 5-semialdehyde dehydrogenase, found in Serratia proteamaculans (strain 568).